The primary structure comprises 638 residues: Phosphomethylpyrimidine synthase (638 aa).

Residues Asn243, Met272, Tyr301, His337, 357 to 359, 398 to 401, and Glu437 each bind substrate; these read SRG and DGLR. His441 lines the Zn(2+) pocket. Tyr464 contacts substrate. Residue His505 participates in Zn(2+) binding. [4Fe-4S] cluster is bound by residues Cys585, Cys588, and Cys593.

Belongs to the ThiC family. In terms of assembly, homodimer. [4Fe-4S] cluster serves as cofactor.

It carries out the reaction 5-amino-1-(5-phospho-beta-D-ribosyl)imidazole + S-adenosyl-L-methionine = 4-amino-2-methyl-5-(phosphooxymethyl)pyrimidine + CO + 5'-deoxyadenosine + formate + L-methionine + 3 H(+). It functions in the pathway cofactor biosynthesis; thiamine diphosphate biosynthesis. In terms of biological role, catalyzes the synthesis of the hydroxymethylpyrimidine phosphate (HMP-P) moiety of thiamine from aminoimidazole ribotide (AIR) in a radical S-adenosyl-L-methionine (SAM)-dependent reaction. In Azoarcus sp. (strain BH72), this protein is Phosphomethylpyrimidine synthase.